The following is a 983-amino-acid chain: Isoleucine--tRNA ligase (983 aa).

Positions 61 to 71 match the 'HIGH' region motif; sequence PYANGELHVGH. L-isoleucyl-5'-AMP is bound at residue Glu608. A 'KMSKS' region motif is present at residues 649–653; the sequence is KMSKS. Position 652 (Lys652) interacts with ATP. Positions 952, 955, 972, and 975 each coordinate Zn(2+).

The protein belongs to the class-I aminoacyl-tRNA synthetase family. IleS type 1 subfamily. In terms of assembly, monomer. Requires Zn(2+) as cofactor.

The protein resides in the cytoplasm. The catalysed reaction is tRNA(Ile) + L-isoleucine + ATP = L-isoleucyl-tRNA(Ile) + AMP + diphosphate. Functionally, catalyzes the attachment of isoleucine to tRNA(Ile). As IleRS can inadvertently accommodate and process structurally similar amino acids such as valine, to avoid such errors it has two additional distinct tRNA(Ile)-dependent editing activities. One activity is designated as 'pretransfer' editing and involves the hydrolysis of activated Val-AMP. The other activity is designated 'posttransfer' editing and involves deacylation of mischarged Val-tRNA(Ile). The polypeptide is Isoleucine--tRNA ligase (Gloeobacter violaceus (strain ATCC 29082 / PCC 7421)).